Here is a 105-residue protein sequence, read N- to C-terminus: Large ribosomal subunit protein bL21 (105 aa).

Belongs to the bacterial ribosomal protein bL21 family. As to quaternary structure, part of the 50S ribosomal subunit. Contacts protein L20.

In terms of biological role, this protein binds to 23S rRNA in the presence of protein L20. In Rickettsia peacockii (strain Rustic), this protein is Large ribosomal subunit protein bL21.